A 723-amino-acid polypeptide reads, in one-letter code: Nuclear hormone receptor HR96 (723 aa).

A DNA-binding region (nuclear receptor) is located at residues 4–79; the sequence is PKNCAVCGDK…IGMKSENIMS (76 aa). 2 consecutive NR C4-type zinc fingers follow at residues 7 to 27 and 43 to 67; these read CAVC…CESC and CPFN…LRKC. A disordered region spans residues 95-163; that stretch reads AKRRLMENGT…QASSPGTQVN (69 aa). Polar residues-rich tracts occupy residues 122 to 142 and 151 to 163; these read DSSS…SCGS and SGRQ…TQVN. The region spanning 483 to 723 is the NR LBD domain; the sequence is EQMKLRELRL…LREIFDLKNH (241 aa).

Belongs to the nuclear hormone receptor family. NR1 subfamily.

It is found in the nucleus. In terms of biological role, binds selectively to the HSP27 20E response element. The protein is Nuclear hormone receptor HR96 (Hr96) of Drosophila melanogaster (Fruit fly).